The sequence spans 195 residues: Imidazoleglycerol-phosphate dehydratase (195 aa).

The protein belongs to the imidazoleglycerol-phosphate dehydratase family.

It is found in the cytoplasm. It carries out the reaction D-erythro-1-(imidazol-4-yl)glycerol 3-phosphate = 3-(imidazol-4-yl)-2-oxopropyl phosphate + H2O. It functions in the pathway amino-acid biosynthesis; L-histidine biosynthesis; L-histidine from 5-phospho-alpha-D-ribose 1-diphosphate: step 6/9. The sequence is that of Imidazoleglycerol-phosphate dehydratase from Dinoroseobacter shibae (strain DSM 16493 / NCIMB 14021 / DFL 12).